The primary structure comprises 44 residues: Thrombin-like enzyme F202 (44 aa).

The Peptidase S1 domain maps to 1–44 (VVGGDECNINEHRFLVALYANSSLLCGGTLINQEWVLIAAHCDR). Residues Cys-26 and Cys-42 are joined by a disulfide bond. The active-site Charge relay system is His-41.

Belongs to the peptidase S1 family. Snake venom subfamily. In terms of assembly, monomer. Contains 6 disulfide bonds. Expressed by the venom gland.

The protein resides in the secreted. Enzyme activity is markedly inhibited by TLCK and PMSF, and moderately by SBTi. Platelet aggregating activity is strongly inhibited by TLCK. Thrombin-like snake venom serine protease that coagulates fibrinogen by inducing a fast degradation of the alpha chain (FGA) from human citrated plasma, and a slow degradation of beta chain (FGB). Potently induces platelet aggregation in both platelet rich plasma and washed platelet preparations in a concentration-dependent fashion. Shows amidolytic activities. In Crotalus durissus cascavella (Northeastern Brazilian rattlesnake), this protein is Thrombin-like enzyme F202.